Consider the following 550-residue polypeptide: Dipeptide-binding protein (550 aa).

The N-terminal stretch at 1–22 (MKQAKIIGLSTVIALSGIILVA) is a signal peptide. A lipid anchor (N-palmitoyl cysteine) is attached at Cys-23. Cys-23 carries the S-diacylglycerol cysteine lipid modification.

This sequence belongs to the bacterial solute-binding protein 5 family. The complex is composed of two ATP-binding proteins (DppD and DppF), two transmembrane proteins (DppB and DppC) and a solute-binding protein (DppA).

It localises to the cell membrane. Functionally, part of the ABC transporter DppABCDF involved in dipeptide transport. Binds di- and tripeptides with high affinity. Requires a free N-terminal alpha-amino group and an alpha-peptide bound contiguous with the N-terminal amino group, has a strong selectivity for L-residues, and shows preference for dipeptides containing methionine or arginine, followed by hydrophobic tripeptides consisting of leucine or valine residues. The chain is Dipeptide-binding protein from Lactococcus lactis subsp. cremoris (strain MG1363).